Consider the following 364-residue polypeptide: Spermidine/putrescine import ATP-binding protein PotA (364 aa).

The 231-residue stretch at Ile6 to Ile236 folds into the ABC transporter domain. Gly38–Thr45 is a binding site for ATP.

It belongs to the ABC transporter superfamily. Spermidine/putrescine importer (TC 3.A.1.11.1) family. The complex is composed of two ATP-binding proteins (PotA), two transmembrane proteins (PotB and PotC) and a solute-binding protein (PotD).

It is found in the cell inner membrane. The catalysed reaction is ATP + H2O + polyamine-[polyamine-binding protein]Side 1 = ADP + phosphate + polyamineSide 2 + [polyamine-binding protein]Side 1.. Functionally, part of the ABC transporter complex PotABCD involved in spermidine/putrescine import. Responsible for energy coupling to the transport system. This Legionella pneumophila (strain Lens) protein is Spermidine/putrescine import ATP-binding protein PotA.